We begin with the raw amino-acid sequence, 211 residues long: Uracil phosphoribosyltransferase (211 aa).

Residues arginine 78, arginine 103, and 130–138 contribute to the 5-phospho-alpha-D-ribose 1-diphosphate site; that span reads DPMLATGGT. Residues isoleucine 195 and 200-202 contribute to the uracil site; that span reads GDA. Aspartate 201 provides a ligand contact to 5-phospho-alpha-D-ribose 1-diphosphate.

Belongs to the UPRTase family. The cofactor is Mg(2+).

The catalysed reaction is UMP + diphosphate = 5-phospho-alpha-D-ribose 1-diphosphate + uracil. It participates in pyrimidine metabolism; UMP biosynthesis via salvage pathway; UMP from uracil: step 1/1. Allosterically activated by GTP. In terms of biological role, catalyzes the conversion of uracil and 5-phospho-alpha-D-ribose 1-diphosphate (PRPP) to UMP and diphosphate. The sequence is that of Uracil phosphoribosyltransferase from Streptomyces coelicolor (strain ATCC BAA-471 / A3(2) / M145).